Here is a 223-residue protein sequence, read N- to C-terminus: 7-cyano-7-deazaguanine synthase (223 aa).

10-20 (FSGGQDSTTCL) is an ATP binding site. Zn(2+) is bound by residues Cys-188, Cys-197, Cys-200, and Cys-203.

It belongs to the QueC family. Requires Zn(2+) as cofactor.

The catalysed reaction is 7-carboxy-7-deazaguanine + NH4(+) + ATP = 7-cyano-7-deazaguanine + ADP + phosphate + H2O + H(+). It participates in purine metabolism; 7-cyano-7-deazaguanine biosynthesis. Its function is as follows. Catalyzes the ATP-dependent conversion of 7-carboxy-7-deazaguanine (CDG) to 7-cyano-7-deazaguanine (preQ(0)). The polypeptide is 7-cyano-7-deazaguanine synthase (Phocaeicola vulgatus (strain ATCC 8482 / DSM 1447 / JCM 5826 / CCUG 4940 / NBRC 14291 / NCTC 11154) (Bacteroides vulgatus)).